A 354-amino-acid polypeptide reads, in one-letter code: Methylthioribose-1-phosphate isomerase (354 aa).

Residues 58-60, arginine 101, and glutamine 204 each bind substrate; that span reads RGA. Aspartate 245 (proton donor) is an active-site residue. 255–256 provides a ligand contact to substrate; the sequence is NK.

The protein belongs to the eIF-2B alpha/beta/delta subunits family. MtnA subfamily.

The enzyme catalyses 5-(methylsulfanyl)-alpha-D-ribose 1-phosphate = 5-(methylsulfanyl)-D-ribulose 1-phosphate. It participates in amino-acid biosynthesis; L-methionine biosynthesis via salvage pathway; L-methionine from S-methyl-5-thio-alpha-D-ribose 1-phosphate: step 1/6. In terms of biological role, catalyzes the interconversion of methylthioribose-1-phosphate (MTR-1-P) into methylthioribulose-1-phosphate (MTRu-1-P). The chain is Methylthioribose-1-phosphate isomerase from Xanthomonas axonopodis pv. citri (strain 306).